An 80-amino-acid polypeptide reads, in one-letter code: Protein KorB (80 aa).

2 DNA-binding regions (H-T-H motif) span residues 13–32 and 56–75; these read AEAA…AELD and NEVT…AEAE.

In terms of biological role, repressor for the transcription of certain pIJ101 promoters, including those the from kilA and kilB loci. The sequence is that of Protein KorB (korB) from Streptomyces lividans.